The following is a 1856-amino-acid chain: Protein TANC1 (1856 aa).

Met-1 carries the N-acetylmethionine modification. Disordered stretches follow at residues Met-1–Thr-45, Ser-58–Pro-130, Lys-203–Gly-222, Arg-262–Tyr-296, and Ile-437–Glu-489. The span at Lys-8–Gly-21 shows a compositional bias: basic and acidic residues. Positions Pro-29 to Thr-45 are enriched in polar residues. Phosphoserine occurs at positions 60, 63, 64, 204, 267, and 462. Over residues Ser-60 to Arg-77 the composition is skewed to low complexity. Residues Lys-203–Leu-216 are compositionally biased toward polar residues. The span at Ser-439 to Thr-475 shows a compositional bias: low complexity. 11 ANK repeats span residues Glu-893–Tyr-925, Asn-931–Gly-960, Asn-964–His-993, Lys-997–Pro-1026, Ala-1037–Ile-1066, Trp-1075–Arg-1104, Arg-1108–Leu-1137, Gln-1141–Ser-1170, Glu-1174–Gln-1203, Asn-1207–His-1236, and Ser-1240–Asn-1269. TPR repeat units lie at residues Leu-1286 to Glu-1319, Val-1333 to Ser-1366, and Glu-1368 to Asn-1400. The span at Leu-1417–Gln-1426 shows a compositional bias: low complexity. Disordered regions lie at residues Leu-1417–Arg-1597, Asp-1636–Phe-1720, and His-1832–Val-1856. A phosphoserine mark is found at Ser-1436 and Ser-1463. Residues Glu-1454–Ser-1463 show a composition bias toward acidic residues. Polar residues-rich tracts occupy residues Glu-1490 to Ala-1505 and Pro-1524 to Gln-1556. Residues Ser-1656–Ser-1686 are compositionally biased toward low complexity. Ser-1665, Ser-1673, and Ser-1674 each carry phosphoserine.

This sequence belongs to the TANC family. Interacts probably directly with DLG1, DLG4, HOMER1. Interacts with DLGAP1, INA, CAMK2A, GRIN2B and GRIA1. Interacts with TNIK and MINK1. Post-translationally, phosphorylated; by MINK1 and TNIK upon stimulation by RAP2A.

Its subcellular location is the postsynaptic density. May be a scaffold component in the postsynaptic density. In Mus musculus (Mouse), this protein is Protein TANC1 (Tanc1).